The sequence spans 1224 residues: Cytosolic carboxypeptidase 1 (1224 aa).

Positions 361-398 (PPDVDDVVDESDDNDDAETESEIETEDDKDQNFKNDDI) are disordered. A compositionally biased stretch (acidic residues) spans 363–389 (DVDDVVDESDDNDDAETESEIETEDDK). Residues 846–1136 (YPYTYSTLKM…KFCVGLLRLK (291 aa)) enclose the Peptidase M14 domain. 3 residues coordinate Zn(2+): His918, Glu921, and His1015. Glu1100 functions as the Proton donor/acceptor in the catalytic mechanism. Over residues 1186–1197 (SAESNDDQDAEL) the composition is skewed to acidic residues. The disordered stretch occupies residues 1186–1224 (SAESNDDQDAELADNVGDYEANNQEDGLSDSDSTRILLS). Over residues 1206-1224 (ANNQEDGLSDSDSTRILLS) the composition is skewed to polar residues.

Belongs to the peptidase M14 family. Zn(2+) is required as a cofactor.

The protein localises to the cytoplasm. It localises to the cytosol. It is found in the nucleus. Its subcellular location is the mitochondrion. The enzyme catalyses (L-glutamyl)(n+1)-gamma-L-glutamyl-L-glutamyl-[protein] + H2O = (L-glutamyl)(n)-gamma-L-glutamyl-L-glutamyl-[protein] + L-glutamate. It catalyses the reaction C-terminal L-alpha-aminoacyl-L-glutamyl-L-glutamyl-[tubulin] + H2O = C-terminal L-alpha-aminoacyl-L-glutamyl-[tubulin] + L-glutamate. Functionally, metallocarboxypeptidase that mediates protein deglutamylation of tubulin and non-tubulin target proteins. Catalyzes the removal of polyglutamate side chains present on the gamma-carboxyl group of glutamate residues within the C-terminal tail of alpha- and beta-tubulin. Specifically cleaves tubulin long-side-chains, while it is not able to remove the branching point glutamate. Also catalyzes the removal of polyglutamate residues from the carboxy-terminus of alpha-tubulin as well as non-tubulin proteins. In Gallus gallus (Chicken), this protein is Cytosolic carboxypeptidase 1 (AGTPBP1).